Consider the following 192-residue polypeptide: Transmembrane protein 276 (192 aa).

Positions 1-32 (MAPKPGAEWSTALSHLVLGVVSLHAAVSTAEA) are cleaved as a signal peptide. The next 4 membrane-spanning stretches (helical) occupy residues 35 to 55 (GAAA…APGL), 63 to 83 (AGAW…FHWV), 89 to 109 (SANL…HLGP), and 114 to 134 (VAGQ…AVFT).

The protein resides in the membrane. The protein is Transmembrane protein 276 of Homo sapiens (Human).